The chain runs to 144 residues: MIALIQRVSQAKVDVNGETIGKIGKGLLVLLGVEKEDNREKADKLAEKVLNYRIFSDENDKMNLNVQQAQGELLIVSQFTLAADTQKGLRPSFSKGAPPALANELYEYFIQKCAGKLPVSTGQFAADMQVSLTNDGPVTFWLNV.

Residues 136-137 carry the Gly-cisPro motif, important for rejection of L-amino acids motif; it reads GP.

This sequence belongs to the DTD family. Homodimer.

It localises to the cytoplasm. It catalyses the reaction glycyl-tRNA(Ala) + H2O = tRNA(Ala) + glycine + H(+). The enzyme catalyses a D-aminoacyl-tRNA + H2O = a tRNA + a D-alpha-amino acid + H(+). An aminoacyl-tRNA editing enzyme that deacylates mischarged D-aminoacyl-tRNAs. Also deacylates mischarged glycyl-tRNA(Ala), protecting cells against glycine mischarging by AlaRS. Acts via tRNA-based rather than protein-based catalysis; rejects L-amino acids rather than detecting D-amino acids in the active site. By recycling D-aminoacyl-tRNA to D-amino acids and free tRNA molecules, this enzyme counteracts the toxicity associated with the formation of D-aminoacyl-tRNA entities in vivo and helps enforce protein L-homochirality. The polypeptide is D-aminoacyl-tRNA deacylase (Haemophilus influenzae (strain PittEE)).